A 156-amino-acid chain; its full sequence is Ribonuclease ageritin (156 aa).

The first 21 residues, 1–21, serve as a signal peptide directing secretion; sequence MSESSTFTTAVVPEGEGVAPM. His-98 is a catalytic residue. Residues Asn-100 and Asn-139 are each glycosylated (N-linked (GlcNAc...) asparagine).

The protein belongs to the ribotoxin-like family. In terms of assembly, monomer. Mg(2+) serves as cofactor.

The protein resides in the vacuole lumen. It catalyses the reaction a 28S rRNA containing guanosine-adenosine pair + H2O = an [RNA fragment]-3'-adenosine-3'-phosphate + a 5'-a hydroxy-guanosine-3'-[RNA fragment].. Its activity is regulated as follows. In contrast to most ribotoxins, activity is completely inhibited by EDTA. In terms of biological role, fungal ribonuclease involved in fungal defense. Highly specific and highly toxic fungal endonuclease that cleaves a single phosphodiester bond in the 28S RNA of eukaryotic ribosomes at a universally conserved GAGA tetraloop of the sarcin-ricin loop (SRL). The damage of the SRL inhibits the binding of translation elongation factors and halts protein biosynthesis, ultimately resulting in the death of the target cells. Shows antitumor activity. Exerts cytotoxicity and induces apoptosis towards rat glial cells and human glioma cells, and also displays some activity towards human neurolastoma cell lines. Shows a strong entomotoxicity against Aedes aegypti larvae, yet no nematotoxicity against nematodes. The sequence is that of Ribonuclease ageritin from Cyclocybe aegerita (Black poplar mushroom).